The following is a 347-amino-acid chain: NADH-ubiquinone oxidoreductase chain 2 (347 aa).

10 consecutive transmembrane segments (helical) span residues 13–33 (VFTGTLITALSSHWFFAWLGL), 55–75 (AAIKYFLTQATASMIFLMAIL), 96–116 (LMIVTALAMKLGMAPFHFWVP), 122–142 (VPLTSGLLLLTWQKLAPISIM), 151–171 (TNILLTLSILSILVGSWGGLN), 178–198 (ILAYSSITHMGWMVAVLPYNP), 199–219 (NITILNLIIYITLTTTTFLIL), 237–257 (LTWLMPLISSTLLSLGGLPPL), 277–297 (IAPTIMAIISLLNLYFYARLI), and 326–346 (LPTLTILTALLLPISPLILSI).

The protein belongs to the complex I subunit 2 family. In terms of assembly, core subunit of respiratory chain NADH dehydrogenase (Complex I) which is composed of 45 different subunits. Interacts with TMEM242.

It is found in the mitochondrion inner membrane. The enzyme catalyses a ubiquinone + NADH + 5 H(+)(in) = a ubiquinol + NAD(+) + 4 H(+)(out). In terms of biological role, core subunit of the mitochondrial membrane respiratory chain NADH dehydrogenase (Complex I) which catalyzes electron transfer from NADH through the respiratory chain, using ubiquinone as an electron acceptor. Essential for the catalytic activity and assembly of complex I. The chain is NADH-ubiquinone oxidoreductase chain 2 from Pongo pygmaeus (Bornean orangutan).